The chain runs to 224 residues: Artemin (224 aa).

The N-terminal stretch at 1–39 is a signal peptide; sequence MELGLAEPTALSHCLRPRWQSAWWPTLAVLALLSCVTEA. Residues 40–111 constitute a propeptide that is removed on maturation; that stretch reads SLDPMSRSPA…AALRGARAAR (72 aa). The interval 43-124 is disordered; the sequence is PMSRSPAARD…RSSRARTTDA (82 aa). Residues 80–95 show a composition bias toward pro residues; the sequence is RPPPQSPQPAPPPPGP. Low complexity predominate over residues 96–116; that stretch reads ALQSPPAALRGARAARAGTRS. Disulfide bonds link C127–C192, C154–C220, and C158–C222. N-linked (GlcNAc...) asparagine glycosylation is present at N206.

The protein belongs to the TGF-beta family. GDNF subfamily. In terms of assembly, homodimer; disulfide-linked. Interacts with GFRA3 coreceptor and RET: forms a 2:2:2 ternary complex composed of ARTN ligand, GFRA3 and RET receptor.

It is found in the secreted. Growth factor that supports the survival of sensory and sympathetic peripheral neurons in culture and also supports the survival of dopaminergic neurons of the ventral mid-brain. Acts by binding to its coreceptor, GFRA3, leading to autophosphorylation and activation of the RET receptor. Strong attractant of gut hematopoietic cells thus promoting the formation Peyer's patch-like structures, a major component of the gut-associated lymphoid tissue. The chain is Artemin from Mus musculus (Mouse).